The following is a 118-amino-acid chain: MIKGIGLDMIDLERVKQVLEKNPRFIERVLTEKEIKQFEKYEGSRKIEFLAGRFAAKEAYAKANGTGFGKHLSFTDVEILQVEDGRPHVTMPIKSGETVFVSITHTARSAAAQVIIEI.

2 residues coordinate Mg(2+): aspartate 8 and glutamate 58.

It belongs to the P-Pant transferase superfamily. AcpS family. It depends on Mg(2+) as a cofactor.

The protein localises to the cytoplasm. It carries out the reaction apo-[ACP] + CoA = holo-[ACP] + adenosine 3',5'-bisphosphate + H(+). Its function is as follows. Transfers the 4'-phosphopantetheine moiety from coenzyme A to a Ser of acyl-carrier-protein. The protein is Holo-[acyl-carrier-protein] synthase of Listeria welshimeri serovar 6b (strain ATCC 35897 / DSM 20650 / CCUG 15529 / CIP 8149 / NCTC 11857 / SLCC 5334 / V8).